Here is a 461-residue protein sequence, read N- to C-terminus: tRNA modification GTPase MnmE (461 aa).

Positions 27, 89, and 128 each coordinate (6S)-5-formyl-5,6,7,8-tetrahydrofolate. Residues Gly224 to Phe382 enclose the TrmE-type G domain. A K(+)-binding site is contributed by Asn234. Residues Asn234–Ser239, Thr253–Thr259, and Asp278–Gly281 each bind GTP. A Mg(2+)-binding site is contributed by Ser238. Residues Thr253, Ile255, and Thr258 each coordinate K(+). Thr259 provides a ligand contact to Mg(2+). Residue Lys461 coordinates (6S)-5-formyl-5,6,7,8-tetrahydrofolate.

Belongs to the TRAFAC class TrmE-Era-EngA-EngB-Septin-like GTPase superfamily. TrmE GTPase family. As to quaternary structure, homodimer. Heterotetramer of two MnmE and two MnmG subunits. The cofactor is K(+).

It is found in the cytoplasm. Exhibits a very high intrinsic GTPase hydrolysis rate. Involved in the addition of a carboxymethylaminomethyl (cmnm) group at the wobble position (U34) of certain tRNAs, forming tRNA-cmnm(5)s(2)U34. This Lactobacillus johnsonii (strain CNCM I-12250 / La1 / NCC 533) protein is tRNA modification GTPase MnmE.